The following is a 224-amino-acid chain: Rhodanese-like domain-containing protein 14, chloroplastic (224 aa).

The transit peptide at 1 to 48 (MASLTSIATPYPSSSQALRLKSSGNTLFSAGVRSAAMVSGHKTLKIQC) directs the protein to the chloroplast. One can recognise a Rhodanese domain in the interval 87 to 220 (KENNFVILDV…WGKEGLPVET (134 aa)). The active-site Cysteine persulfide intermediate is Cys166.

Its subcellular location is the plastid. The protein resides in the chloroplast. This Arabidopsis thaliana (Mouse-ear cress) protein is Rhodanese-like domain-containing protein 14, chloroplastic.